The chain runs to 330 residues: Phenylalanine--tRNA ligase alpha subunit (330 aa).

E246 contributes to the Mg(2+) binding site.

It belongs to the class-II aminoacyl-tRNA synthetase family. Phe-tRNA synthetase alpha subunit type 1 subfamily. Tetramer of two alpha and two beta subunits. It depends on Mg(2+) as a cofactor.

The protein localises to the cytoplasm. The catalysed reaction is tRNA(Phe) + L-phenylalanine + ATP = L-phenylalanyl-tRNA(Phe) + AMP + diphosphate + H(+). This chain is Phenylalanine--tRNA ligase alpha subunit, found in Campylobacter jejuni subsp. jejuni serotype O:6 (strain 81116 / NCTC 11828).